A 1089-amino-acid chain; its full sequence is Translocase of chloroplast 120, chloroplastic (1089 aa).

At G2 the chain carries N-acetylglycine. 3 disordered regions span residues 158-179, 255-339, and 353-381; these read ATEDVNLENGNTHSSSENGVVS, TLSP…GLGR, and QPRVNGNVSHNQPQQAEDSTTAETDEHDE. Polar residues predominate over residues 165–176; it reads ENGNTHSSSENG. A phosphoserine mark is found at S179, S263, and S283. The span at 300-312 shows a compositional bias: basic and acidic residues; that stretch reads EIKESQHMERESE. A compositionally biased stretch (low complexity) spans 327 to 339; it reads AALPPARPAGLGR. A compositionally biased stretch (polar residues) spans 353-374; that stretch reads QPRVNGNVSHNQPQQAEDSTTA. The region spanning 454–683 is the AIG1-type G domain; sequence DFSCTIMVLG…KLQDNIPGGQ (230 aa). Residues 463–470 form a G1 region; the sequence is GKSGVGKS. Residues 466–471 and 485–490 contribute to the GTP site; these read GVGKSA and DAFQVG. Residue S470 coordinates Mg(2+). The tract at residues 485-488 is homodimerization; that stretch reads DAFQ. The interval 489–493 is G2; sequence VGTKK. A G3 region spans residues 510-513; that stretch reads DTPG. Residues 548–553 are homodimerization; that stretch reads RLDMQS. The segment at 582–585 is G4; sequence THAA. GTP contacts are provided by residues H583 and 631 to 632; that span reads EN. Residues 631–633 are G5; that stretch reads ENH. A disordered region spans residues 710-748; the sequence is PEQQYDDEDDEDDLDESSDSEEESEYDELPPFKRLTKAE. The segment covering 713 to 737 has biased composition (acidic residues); sequence QYDDEDDEDDLDESSDSEEESEYDE. A coiled-coil region spans residues 767–788; that stretch reads REKLFMKRQMKEERKRRKLLKK. Residues 1064-1080 form a helical membrane-spanning segment; it reads LAVVALVPLFKKLLTYY.

Belongs to the TRAFAC class TrmE-Era-EngA-EngB-Septin-like GTPase superfamily. AIG1/Toc34/Toc159-like paraseptin GTPase family. TOC159 subfamily. As to quaternary structure, homodimer. Part of the TOC core complex that includes 1 protein for the specific recognition of transit peptides surrounded by a ring composed of four proteins forming translocation channels, and four to five GTP-binding proteins providing energy. This core complex can interact with components of the TIC complex to form a larger import complex. Chloroplastic protein precursor such as prSS (precursor of the RuBisCO small subunit) interacts with these complexes. The TOC complex contains a specific subset of polar lipids such as digalactosyldiacylglyceride (DGDG), phosphatidylcholine (PC) and phosphatidylglycerol (PG). Mg(2+) is required as a cofactor. Post-translationally, phosphorylated by KOC1. As to expression, expressed in seedlings, flowers, and roots.

The protein localises to the plastid. Its subcellular location is the chloroplast outer membrane. The protein resides in the cytoplasm. In terms of biological role, GTPase involved in protein precursor import into chloroplasts. Seems to recognize chloroplast-destined precursor proteins and regulate their presentation to the translocation channel through GTP hydrolysis. Probably specialized in the import of nuclear encoded non-photosynthetic preproteins from the cytoplasm to the chloroplast. The chain is Translocase of chloroplast 120, chloroplastic from Arabidopsis thaliana (Mouse-ear cress).